An 88-amino-acid chain; its full sequence is Small ribosomal subunit protein uS17 (88 aa).

It belongs to the universal ribosomal protein uS17 family. Part of the 30S ribosomal subunit.

One of the primary rRNA binding proteins, it binds specifically to the 5'-end of 16S ribosomal RNA. This chain is Small ribosomal subunit protein uS17, found in Methylorubrum extorquens (strain PA1) (Methylobacterium extorquens).